We begin with the raw amino-acid sequence, 956 residues long: Nitrogen regulatory protein NUT1 (956 aa).

Residues 1-12 are compositionally biased toward basic and acidic residues; the sequence is MNPTITEHDFRF. Disordered regions lie at residues 1-51, 120-222, 240-262, 348-373, and 524-661; these read MNPT…NDAQ, QQEE…PAAA, KTSI…FQVP, GQSI…SQVS, and TLPG…DAPT. The span at 15 to 37 shows a compositional bias: low complexity; it reads RPAAPGRDPGSDSSDDPLPASLR. 4 stretches are compositionally biased toward polar residues: residues 42–51, 131–153, 167–194, and 208–217; these read DRQSAFNDAQ, PLKT…QKKS, SHGS…NAIS, and AAQSQFNPQS. Residues 588 to 613 show a composition bias toward polar residues; it reads NASTTAIPNSQMQYEQQGVQGHTNSP. Low complexity-rich tracts occupy residues 623 to 633 and 640 to 661; these read SGFSSVVHSRP and SKNG…DAPT. Residues 663-687 form a GATA-type zinc finger; the sequence is CTNCATQTTPLWRRNPEGQPLCNAC. Residues 708–890 are disordered; sequence KKRNRGSGSN…AATRPSGFGT (183 aa). The span at 713-760 shows a compositional bias: polar residues; that stretch reads GSGSNVPGATSGSRSKKGATSTAVSGTNTRKNSSLAISRTASTTNVQV. The span at 812–839 shows a compositional bias: low complexity; the sequence is VVPIAAAPPKNMPGPGAAAAARTVALGP. Polar residues-rich tracts occupy residues 849 to 863 and 872 to 881; these read SPAN…NANH and PENSTGSNEA.

It localises to the nucleus. Its function is as follows. Major nitrogen regulatory protein; activates expression of nitrogen-regulated genes. This is Nitrogen regulatory protein NUT1 (NUT1) from Pyricularia oryzae (strain 70-15 / ATCC MYA-4617 / FGSC 8958) (Rice blast fungus).